A 177-amino-acid chain; its full sequence is Parathyroid hormone-related protein (177 aa).

The signal sequence occupies residues 1–24 (MLWRLVQQWSVAVFLLSYSVPSCG). A propeptide spanning residues 25 to 34 (RSVEELGRRL) is cleaved from the precursor. The segment at 57-68 (RFFLHHLIAEIH) is important for receptor binding. Residues 74–149 (ATSEVSPNSK…KRRTRSAWLT (76 aa)) form a disordered region. Positions 76–90 (SEVSPNSKPAPNTKN) are enriched in polar residues. The Nuclear localization signal motif lies at 108-129 (TNKVETYKEQPLKTPGKKKKSK). The segment covering 109-118 (NKVETYKEQP) has biased composition (basic and acidic residues). Residues 122 to 132 (PGKKKKSKPGK) show a composition bias toward basic residues.

The protein belongs to the parathyroid hormone family. As to quaternary structure, PTHrP interacts with PTH1R (via N-terminal extracellular domain). In terms of processing, there are several secretory forms, including osteostatin, arising from endoproteolytic cleavage of the initial translation product. Each of these secretory forms is believed to have one or more of its own receptors that mediates the normal paracrine, autocrine and endocrine actions.

It is found in the secreted. The protein localises to the cytoplasm. The protein resides in the nucleus. Its function is as follows. Neuroendocrine peptide which is a critical regulator of cellular and organ growth, development, migration, differentiation and survival and of epithelial calcium ion transport. Acts by binding to its receptor, PTH1R, activating G protein-coupled receptor signaling. Regulates endochondral bone development and epithelial-mesenchymal interactions during the formation of the mammary glands and teeth. Required for skeletal homeostasis. Promotes mammary mesenchyme differentiation and bud outgrowth by modulating mesenchymal cell responsiveness to BMPs. Up-regulates BMPR1A expression in the mammary mesenchyme and this increases the sensitivity of these cells to BMPs and allows them to respond to BMP4 in a paracrine and/or autocrine fashion. BMP4 signaling in the mesenchyme, in turn, triggers epithelial outgrowth and augments MSX2 expression, which causes the mammary mesenchyme to inhibit hair follicle formation within the nipple sheath. Functionally, potent inhibitor of osteoclastic bone resorption. The protein is Parathyroid hormone-related protein (PTHLH) of Bos taurus (Bovine).